The chain runs to 428 residues: Glutamate-1-semialdehyde 2,1-aminomutase (428 aa).

K267 carries the post-translational modification N6-(pyridoxal phosphate)lysine.

Belongs to the class-III pyridoxal-phosphate-dependent aminotransferase family. HemL subfamily. As to quaternary structure, homodimer. The cofactor is pyridoxal 5'-phosphate.

The protein resides in the cytoplasm. The enzyme catalyses (S)-4-amino-5-oxopentanoate = 5-aminolevulinate. It participates in porphyrin-containing compound metabolism; protoporphyrin-IX biosynthesis; 5-aminolevulinate from L-glutamyl-tRNA(Glu): step 2/2. The chain is Glutamate-1-semialdehyde 2,1-aminomutase from Trichlorobacter lovleyi (strain ATCC BAA-1151 / DSM 17278 / SZ) (Geobacter lovleyi).